The primary structure comprises 67 residues: DNA-directed RNA polymerase subunit omega (67 aa).

Belongs to the RNA polymerase subunit omega family. In terms of assembly, the RNAP catalytic core consists of 2 alpha, 1 beta, 1 beta' and 1 omega subunit. When a sigma factor is associated with the core the holoenzyme is formed, which can initiate transcription.

The enzyme catalyses RNA(n) + a ribonucleoside 5'-triphosphate = RNA(n+1) + diphosphate. In terms of biological role, promotes RNA polymerase assembly. Latches the N- and C-terminal regions of the beta' subunit thereby facilitating its interaction with the beta and alpha subunits. This chain is DNA-directed RNA polymerase subunit omega, found in Dictyoglomus turgidum (strain DSM 6724 / Z-1310).